The chain runs to 766 residues: Serine/threonine-protein kinase tousled-like 1 (766 aa).

An N-acetylmethionine modification is found at Met1. A compositionally biased stretch (polar residues) spans 1–19 (MSVQSSSGSLEGPPSWSQL). Residues 1–197 (MSVQSSSGSL…SPSPTALAFG (197 aa)) are disordered. A compositionally biased stretch (low complexity) spans 20–33 (STSPTPGSAAAARS). At Thr38 the chain carries Phosphothreonine. The span at 43–64 (RPREGAMDELHSLDPRRQELLE) shows a compositional bias: basic and acidic residues. Residues Ser54, Ser77, and Ser80 each carry the phosphoserine modification. The segment covering 68–85 (TGVASGSTGSTGSCSVGA) has biased composition (low complexity). Residues 87 to 103 (ASTNNESSNHSFGSLGS) show a composition bias toward polar residues. Positions 105–121 (SDKESETPEKKQSESSR) are enriched in basic and acidic residues. Phosphoserine occurs at positions 134, 159, 174, and 176. A compositionally biased stretch (low complexity) spans 170-192 (SPQNSHSHSTPSSSVRPNSPSPT). Residues 230–281 (QDLEKKEGRIDDLLRANCDLRRQIDEQQKLLEKYKERLNKCISMSKKLLIEK) are a coiled coil. The interval 346-383 (LAKRKPPTANNSQAPSTNSEPKQRKNKAVNGAENDPFV) is disordered. The segment covering 353–365 (TANNSQAPSTNSE) has biased composition (polar residues). Positions 397-445 (HEQEEIFKLRLGHLKKEEAEIQAELERLERVRNLHIRELKRINNEDNSQ) form a coiled coil. A Protein kinase domain is found at 456 to 734 (YLLLHLLGRG…VHQLANDPYL (279 aa)). ATP contacts are provided by residues 462-470 (LGRGGFSEV) and Lys485. Asp586 acts as the Proton acceptor in catalysis. Ser743 bears the Phosphoserine mark.

The protein belongs to the protein kinase superfamily. Ser/Thr protein kinase family. In terms of assembly, heterodimer with TLK2. It depends on Mg(2+) as a cofactor. Widely expressed. Present in fetal placenta, liver, kidney and pancreas but not heart or skeletal muscle. Also found in adult cell lines. Isoform 3 is ubiquitously expressed in all tissues examined.

The protein localises to the nucleus. It catalyses the reaction L-seryl-[protein] + ATP = O-phospho-L-seryl-[protein] + ADP + H(+). The catalysed reaction is L-threonyl-[protein] + ATP = O-phospho-L-threonyl-[protein] + ADP + H(+). Its activity is regulated as follows. Cell-cycle regulated, maximal activity in S-phase. Inactivated by phosphorylation at Ser-743, potentially by CHEK1. Its function is as follows. Rapidly and transiently inhibited by phosphorylation following the generation of DNA double-stranded breaks during S-phase. This is cell cycle checkpoint and ATM-pathway dependent and appears to regulate processes involved in chromatin assembly. Isoform 3 phosphorylates and enhances the stability of the t-SNARE SNAP23, augmenting its assembly with syntaxin. Isoform 3 protects the cells from the ionizing radiation by facilitating the repair of DSBs. In vitro, phosphorylates histone H3 at 'Ser-10'. The sequence is that of Serine/threonine-protein kinase tousled-like 1 (TLK1) from Homo sapiens (Human).